Reading from the N-terminus, the 83-residue chain is FMRFamide-like neuropeptide 23 (83 aa).

The N-terminal stretch at 1-24 is a signal peptide; the sequence is MLLPKISILLYILVVLQETAAVRG. Residues 25 to 36 constitute a propeptide that is removed on maturation; that stretch reads ALFRSGRAVPFE. Phe-47 carries the post-translational modification Phenylalanine amide. The propeptide occupies 50-83; that stretch reads AGMASGVGGGSEGGPDDVKNSYIRVNGEPEIVYQ.

This sequence belongs to the FARP (FMRFamide related peptide) family. As to expression, each flp gene is expressed in a distinct set of neurons.

Its subcellular location is the secreted. Its function is as follows. FMRFamides and FMRFamide-like peptides are neuropeptides. In Caenorhabditis elegans, this protein is FMRFamide-like neuropeptide 23 (flp-23).